A 150-amino-acid chain; its full sequence is Nucleoside diphosphate kinase (150 aa).

ATP is bound by residues Lys-9, Phe-57, Arg-85, Thr-91, Arg-102, and Asn-112. His-115 (pros-phosphohistidine intermediate) is an active-site residue.

Belongs to the NDK family. It depends on Mg(2+) as a cofactor.

The protein localises to the cytoplasm. It catalyses the reaction a 2'-deoxyribonucleoside 5'-diphosphate + ATP = a 2'-deoxyribonucleoside 5'-triphosphate + ADP. The enzyme catalyses a ribonucleoside 5'-diphosphate + ATP = a ribonucleoside 5'-triphosphate + ADP. Its function is as follows. Major role in the synthesis of nucleoside triphosphates other than ATP. The ATP gamma phosphate is transferred to the NDP beta phosphate via a ping-pong mechanism, using a phosphorylated active-site intermediate. The protein is Nucleoside diphosphate kinase of Methanoregula boonei (strain DSM 21154 / JCM 14090 / 6A8).